The chain runs to 227 residues: Large ribosomal subunit protein bL25 (227 aa).

A disordered region spans residues alanine 199–alanine 227. Over residues alanine 209 to alanine 227 the composition is skewed to basic and acidic residues.

This sequence belongs to the bacterial ribosomal protein bL25 family. CTC subfamily. Part of the 50S ribosomal subunit; part of the 5S rRNA/L5/L18/L25 subcomplex. Contacts the 5S rRNA. Binds to the 5S rRNA independently of L5 and L18.

Functionally, this is one of the proteins that binds to the 5S RNA in the ribosome where it forms part of the central protuberance. In Methylobacterium radiotolerans (strain ATCC 27329 / DSM 1819 / JCM 2831 / NBRC 15690 / NCIMB 10815 / 0-1), this protein is Large ribosomal subunit protein bL25.